The sequence spans 1324 residues: Myotubularin-related protein DDB_G0290005 (1324 aa).

Positions 140-276 (KYHDNTTPNN…TSSTNGNCST (137 aa)) are disordered. Residues 144-180 (NTTPNNNNNNNNNNNNNNNNTNNNNNNNINKSNNSST) are compositionally biased toward low complexity. A compositionally biased stretch (polar residues) spans 181 to 194 (DQLNSFSLEKQPSQ). Over residues 195 to 222 (NENLNNNNNNNNNNNNGNNNINNNNLMN) the composition is skewed to low complexity. Residues 223–247 (SLTQPSTSSRSRLLKSNSTPINLNE) show a composition bias toward polar residues. Over residues 248-276 (SSTSTNSPTLSSTTTTTTTTSSTNGNCST) the composition is skewed to low complexity. In terms of domain architecture, Myotubularin phosphatase spans 349-807 (GWLFYDPIEE…KGVQLWSDYF (459 aa)). Residues 514–515 (NI), 575–581 (CIDGWDR), and Arg-621 each bind substrate. Cys-575 (phosphocysteine intermediate) is an active-site residue. Disordered stretches follow at residues 624–664 (QSIS…TTTS), 841–1043 (QKKK…QQQE), 1066–1110 (EQQE…QQQT), 1144–1213 (RKQE…LTMP), and 1232–1296 (LHPN…DNTS). Low complexity-rich tracts occupy residues 625 to 664 (SISS…TTTS) and 852 to 864 (GASG…SGSS). A compositionally biased stretch (basic residues) spans 865–882 (SKHHHHHHHHHHHHHHRK). Basic and acidic residues predominate over residues 883–894 (STDEKDSKEKSS). Composition is skewed to low complexity over residues 899–914 (SRTS…STSS) and 927–973 (TITT…TTTP). Basic and acidic residues predominate over residues 988–1002 (DKLKSPSGDDIKQEQ). Residues 1005 to 1024 (MNQFTSQHPNNQMESSSEIN) are compositionally biased toward polar residues. Residues 1020–1195 (SSEINQQNEQ…LEQQKPKADI (176 aa)) adopt a coiled-coil conformation. Residues 1025 to 1043 (QQNEQSQLEQQQEQQQQQE) are compositionally biased toward low complexity. A compositionally biased stretch (polar residues) spans 1079 to 1090 (PNETITYSMESD). Positions 1091–1109 (SQSSISQNQNQLQQQQQQQ) are enriched in low complexity. Over residues 1144–1193 (RKQEKEKRKLEKEKKQKERAERKLEKEKKRDQKEREQKEKELLEQQKPKA) the composition is skewed to basic and acidic residues. Polar residues predominate over residues 1234-1243 (PNLSDQNSQT). Low complexity-rich tracts occupy residues 1244–1258 (NSSG…NSPN) and 1265–1294 (SNLS…NNDN).

It belongs to the protein-tyrosine phosphatase family. Non-receptor class myotubularin subfamily.

The protein resides in the cytoplasm. In terms of biological role, phosphatase that acts on lipids with a phosphoinositol headgroup. This is Myotubularin-related protein DDB_G0290005 from Dictyostelium discoideum (Social amoeba).